The following is a 151-amino-acid chain: MTEAKIVDISSKDIVLREAVVEGYIKLRKETIEKIKNKEVEKGDVITVAKTAGILAAKKTPELIPMCHPIPLEFVDVEIKIEEEGLRVISTVKAHYKTGVEMEALTATSVALLTIWDMVKKYEKDENGQYPYTEIKSIRVINKIKTYDDMK.

Substrate-binding positions include 66 to 68 (MCH) and 102 to 103 (ME). Residue Asp-117 is part of the active site.

It belongs to the MoaC family. In terms of assembly, homohexamer; trimer of dimers.

It carries out the reaction (8S)-3',8-cyclo-7,8-dihydroguanosine 5'-triphosphate = cyclic pyranopterin phosphate + diphosphate. Its pathway is cofactor biosynthesis; molybdopterin biosynthesis. Functionally, catalyzes the conversion of (8S)-3',8-cyclo-7,8-dihydroguanosine 5'-triphosphate to cyclic pyranopterin monophosphate (cPMP). The sequence is that of Probable cyclic pyranopterin monophosphate synthase from Sulfurisphaera tokodaii (strain DSM 16993 / JCM 10545 / NBRC 100140 / 7) (Sulfolobus tokodaii).